Reading from the N-terminus, the 132-residue chain is Sirohydrochlorin cobaltochelatase (132 aa).

The active-site Proton acceptor is the H10. H10 is a Co(2+) binding site. Substrate is bound by residues R46 and 69–74 (ISYGLH). Residue H74 participates in Co(2+) binding.

Belongs to the CbiX family. CbiXS subfamily. Homotetramer; dimer of dimers.

It carries out the reaction Co-sirohydrochlorin + 2 H(+) = sirohydrochlorin + Co(2+). Its pathway is cofactor biosynthesis; adenosylcobalamin biosynthesis; cob(II)yrinate a,c-diamide from sirohydrochlorin (anaerobic route): step 1/10. Its function is as follows. Catalyzes the insertion of Co(2+) into sirohydrochlorin as part of the anaerobic pathway to cobalamin biosynthesis. The protein is Sirohydrochlorin cobaltochelatase of Archaeoglobus fulgidus (strain ATCC 49558 / DSM 4304 / JCM 9628 / NBRC 100126 / VC-16).